Reading from the N-terminus, the 1123-residue chain is uncharacterized protein (1123 aa).

Disordered regions lie at residues 136–229 (LGES…PKLT), 262–471 (MLQY…LNQH), 483–514 (LSSI…SPNL), 527–609 (KKIN…QSDD), 629–769 (SILC…NNIS), 782–812 (LKPK…NSSS), 835–1005 (ITNN…GESN), and 1070–1099 (NNNN…NNNI). Residues 166-185 (GGNGGNSGTNGDGDDGGCSL) are compositionally biased toward gly residues. Residues 190-199 (DENDYEDGMV) show a composition bias toward acidic residues. Over residues 211–223 (SGDGGGGGGGGGD) the composition is skewed to gly residues. A compositionally biased stretch (low complexity) spans 262-322 (MLQYQQQQQQ…TTTTHSNNSN (61 aa)). Residues 329–343 (PLNNSNSNIHFLTNQ) are compositionally biased toward polar residues. Low complexity-rich tracts occupy residues 344 to 387 (QNSD…SNLN), 397 to 464 (STST…SSSS), 489 to 499 (NNKENNNNNNN), 527 to 548 (KKIN…NISS), and 563 to 585 (HQQQ…QQHQ). Residues 590–604 (SKSSSELQVPSSNYH) are compositionally biased toward polar residues. Residues 632 to 646 (CKDDSKTNTNKDKDN) are compositionally biased toward basic and acidic residues. Low complexity-rich tracts occupy residues 647–707 (NNSN…INNN) and 727–769 (SVSS…NNIS). Residues 790–799 (SSPSIPTTSP) are compositionally biased toward polar residues. Low complexity-rich tracts occupy residues 835–984 (ITNN…NNNI) and 1070–1098 (NNNN…NNNN).

This is an uncharacterized protein from Dictyostelium discoideum (Social amoeba).